The primary structure comprises 365 residues: NAC domain-containing protein 37 (365 aa).

Positions 9 to 158 (VPPGFRFHPT…GWVVCRAFKK (150 aa)) constitute an NAC domain. A DNA-binding region spans residues 109–164 (IGMRKTLVFYKGRAPNGKKSDWIMHEYRLESDENAPPQEEGWVVCRAFKKRATGQA).

It belongs to the plant vascular related NAC-domain protein family. As to quaternary structure, interacts with NAC030/VND7. In terms of tissue distribution, expressed in root metaxylem pole and in shoot pre-procambium and procambium. Present in root developing xylems. Specifically expressed in vessels but not in interfascicular fibers in stems.

The protein localises to the nucleus. Functionally, transcription activator that binds to the secondary wall NAC binding element (SNBE), 5'-(T/A)NN(C/T)(T/C/G)TNNNNNNNA(A/C)GN(A/C/T)(A/T)-3', in the promoter of target genes. Involved in xylem formation by promoting the expression of secondary wall-associated transcription factors and of genes involved in secondary wall biosynthesis and programmed cell death, genes driven by the secondary wall NAC binding element (SNBE). Triggers thickening of secondary walls. The polypeptide is NAC domain-containing protein 37 (Arabidopsis thaliana (Mouse-ear cress)).